The sequence spans 117 residues: Pancreatic progenitor cell differentiation and proliferation factor A (117 aa).

The tract at residues 22–46 (GSTSSNSSCSSSEYTGEVIPHPPGL) is disordered. Residues 23–33 (STSSNSSCSSS) show a composition bias toward low complexity.

It belongs to the PPDPF family. Expressed exclusively in the exocrine cells during pancreas development.

In terms of biological role, probable regulator of exocrine pancreas development. This Danio rerio (Zebrafish) protein is Pancreatic progenitor cell differentiation and proliferation factor A (ppdpfa).